The sequence spans 399 residues: Probable aspartate/prephenate aminotransferase (399 aa).

Residues Gly-39, Trp-125, and Asn-175 each coordinate L-aspartate. N6-(pyridoxal phosphate)lysine is present on Lys-239. Arg-375 contacts L-aspartate.

It belongs to the class-I pyridoxal-phosphate-dependent aminotransferase family. In terms of assembly, homodimer. Pyridoxal 5'-phosphate serves as cofactor.

Its subcellular location is the cytoplasm. The enzyme catalyses L-aspartate + 2-oxoglutarate = oxaloacetate + L-glutamate. It catalyses the reaction L-arogenate + 2-oxoglutarate = prephenate + L-glutamate. Functionally, catalyzes the reversible conversion of aspartate and 2-oxoglutarate to glutamate and oxaloacetate. Can also transaminate prephenate in the presence of glutamate. This is Probable aspartate/prephenate aminotransferase (aatA) from Rickettsia bellii (strain RML369-C).